The chain runs to 430 residues: Signal recognition particle receptor FtsY (430 aa).

Residues 75–95 (DTGELPAVGDDATVPRDSPRH) form a disordered region. GTP contacts are provided by residues 238-245 (GVNGTGKT), 320-324 (DTAGR), and 382-385 (TKLD).

The protein belongs to the GTP-binding SRP family. FtsY subfamily. As to quaternary structure, part of the signal recognition particle protein translocation system, which is composed of SRP and FtsY.

It is found in the cell membrane. It localises to the cytoplasm. It carries out the reaction GTP + H2O = GDP + phosphate + H(+). Functionally, involved in targeting and insertion of nascent membrane proteins into the cytoplasmic membrane. Acts as a receptor for the complex formed by the signal recognition particle (SRP) and the ribosome-nascent chain (RNC). The protein is Signal recognition particle receptor FtsY of Mycobacterium leprae (strain TN).